Here is a 1202-residue protein sequence, read N- to C-terminus: MAGHLVKYGKHRTRRSYSRIKEVLELPNLIEIQTDSYNWFMEKGLREMFDDIMPIDDFQGKLSLEFVDYQLLEPKYTVDEAREHDANYSAPLHVTLRLTNHETGEIKSQDVFFGDFPLMTDQGTFIINGAERVIVSQLVRSPGVYYSEENDKNGRPNYGATFIPNRGAWLEYETDAKNVSYVRIDRTRKLPMTELIRALGFGSDDEIIDMFGGDSETLSLTLDKDVHKNAEDSRVEEALKDIYERLRPGEPKTADSARSLLTARFFDPKRYDMAPVGRYKTNKKLMLKYRLLGQTLAETLADPDTGEVLAQKGDTVTKELLNKLEPYLDRDDFKTITYTPSDEAVVTEPVKLQKILVYSKNDPDRVVPIIGNGHIPLEYKHIEPADILASLNYFFNLQEGIGSTDDIDHLGNRRIRSVGELLQNQFRIGLARMERVVRERMSIQDPDTVTPQQLINIRPVVASIKEFFGSSQLSQFMDQTNPLGELTHKRRLSALGPGGLTRDRAGYEVRDVHYTHYGRMCPIETPEGPNIGLINSLSSYARVNKYGFIETPYRRVSWKDHKVTDKIDYLTADEEDNFIIAQANTPLNDDGSFVDDQVMARDKDDYIETSVENIDYMDVSPKQVVSVASACIPFLENDDSNRALMGANMQRQAVPLINPHAPLVSTGIDYKAAHDSGVAMIAKKPGTVEYVDAREVRVREEDGTLDTYKLMKFRRSNGGKNYNQRPIVKVGEHVDADDVLADGPSMEQGELALGQNPLIAFMTWQGYNFEDAIAINERLVKDDVYTSIHIESYESEARETKLGPEEMTREIPNVGDDALKDLDENGIVRVGAEVHDGDILVGKVTPKGMTELSAEERLLHAIFGEKSREVRDTSLRVPHGGGGIIQDVKVFTRENGDELSPGVNTMVRVYIAQKRKIQVGDKMSGRHGNKGTVSIVVPEEDMPYMPDGTPIDIMLSPMGVPSRMNIGQLLELHLGMAARRLGIHMATPVFDGASDKDVWDAVRESGFPEDGKTILYDGRTGEPFENRIAVGSMHYLKLAHMVDDKIHARSTGPYSLVTQQPLGGKAQFGGQRFGEMEVWALEAYGAAYTLQEILTYKSDDTVGRVRTYDAIINGQPIPKPGVPESFRVLVKELQALGLDMKVLDGNNKEIQLKNMDEDDDEVVNVDALAKYAEEHKADDKKNEEENKSEATSTTTDDKTNQN.

The interval 1154–1202 (NMDEDDDEVVNVDALAKYAEEHKADDKKNEEENKSEATSTTTDDKTNQN) is disordered. Positions 1171 to 1188 (YAEEHKADDKKNEEENKS) are enriched in basic and acidic residues.

It belongs to the RNA polymerase beta chain family. As to quaternary structure, the RNAP catalytic core consists of 2 alpha, 1 beta, 1 beta' and 1 omega subunit. When a sigma factor is associated with the core the holoenzyme is formed, which can initiate transcription.

It catalyses the reaction RNA(n) + a ribonucleoside 5'-triphosphate = RNA(n+1) + diphosphate. DNA-dependent RNA polymerase catalyzes the transcription of DNA into RNA using the four ribonucleoside triphosphates as substrates. In Limosilactobacillus reuteri (strain DSM 20016) (Lactobacillus reuteri), this protein is DNA-directed RNA polymerase subunit beta.